The chain runs to 468 residues: uncharacterized protein (468 aa).

A run of 12 helical transmembrane segments spans residues L13–F33, L40–L60, A76–I96, L112–G132, F141–A161, L194–L214, V237–T257, P260–Q280, C328–I348, F354–G374, I414–V434, and A443–I463.

It belongs to the NhaC Na(+)/H(+) (TC 2.A.35) antiporter family.

The protein resides in the cell membrane. This is an uncharacterized protein from Haemophilus influenzae (strain ATCC 51907 / DSM 11121 / KW20 / Rd).